The following is a 214-amino-acid chain: Thymidylate kinase (214 aa).

Position 13-20 (G13–S20) interacts with ATP.

It belongs to the thymidylate kinase family.

The enzyme catalyses dTMP + ATP = dTDP + ADP. Its function is as follows. Phosphorylation of dTMP to form dTDP in both de novo and salvage pathways of dTTP synthesis. This chain is Thymidylate kinase, found in Malacoplasma penetrans (strain HF-2) (Mycoplasma penetrans).